The primary structure comprises 427 residues: Glutamate-1-semialdehyde 2,1-aminomutase (427 aa).

The residue at position 265 (Lys265) is an N6-(pyridoxal phosphate)lysine.

The protein belongs to the class-III pyridoxal-phosphate-dependent aminotransferase family. HemL subfamily. In terms of assembly, homodimer. Pyridoxal 5'-phosphate serves as cofactor.

It is found in the cytoplasm. The catalysed reaction is (S)-4-amino-5-oxopentanoate = 5-aminolevulinate. It functions in the pathway porphyrin-containing compound metabolism; protoporphyrin-IX biosynthesis; 5-aminolevulinate from L-glutamyl-tRNA(Glu): step 2/2. This chain is Glutamate-1-semialdehyde 2,1-aminomutase, found in Burkholderia vietnamiensis (strain G4 / LMG 22486) (Burkholderia cepacia (strain R1808)).